A 361-amino-acid polypeptide reads, in one-letter code: Chitinase-3-like protein 1 (361 aa).

Residues 1–361 enclose the GH18 domain; the sequence is YKLICYYTSW…SAVKDVLAEV (361 aa). Cys-5 and Cys-30 form a disulfide bridge. Residue Asn-39 is glycosylated (N-linked (GlcNAc...) asparagine). Chitin is bound by residues 49-50, 76-79, Tyr-120, 183-186, and Arg-241; these read EW, GGWN, and LTYD. Cys-278 and Cys-342 are disulfide-bonded. The interval 302–316 is important for AKT1 activation and IL8 production; sequence QWVAYDDQESVKNKA. Trp-330 contributes to the chitin binding site. An N-linked (GlcNAc...) asparagine glycan is attached at Asn-345.

It belongs to the glycosyl hydrolase 18 family. In terms of assembly, monomer. In terms of tissue distribution, detected in mammary gland.

The protein localises to the secreted. It localises to the extracellular space. Its subcellular location is the cytoplasm. The protein resides in the perinuclear region. It is found in the endoplasmic reticulum. In terms of biological role, carbohydrate-binding lectin with a preference for chitin. Has no chitinase activity. May play a role in tissue remodeling and in the capacity of cells to respond to and cope with changes in their environment. Plays a role in T-helper cell type 2 (Th2) inflammatory response and IL-13-induced inflammation, regulating allergen sensitization, inflammatory cell apoptosis, dendritic cell accumulation and M2 macrophage differentiation. Facilitates invasion of pathogenic enteric bacteria into colonic mucosa and lymphoid organs. Mediates activation of AKT1 signaling pathway and subsequent IL8 production in colonic epithelial cells. Regulates antibacterial responses in lung by contributing to macrophage bacterial killing, controlling bacterial dissemination and augmenting host tolerance. Also regulates hyperoxia-induced injury, inflammation and epithelial apoptosis in lung. The sequence is that of Chitinase-3-like protein 1 (CHI3L1) from Ovis aries (Sheep).